Reading from the N-terminus, the 329-residue chain is UDP-glucose 4-epimerase (329 aa).

NAD(+) contacts are provided by residues 13-14 (YV), 33-38 (HNLSTG), 53-54 (DI), 76-80 (FAAFS), N95, T120, Y144, K148, and F172. Residues T120 and Y144 each contribute to the substrate site. Y144 serves as the catalytic Proton acceptor. Substrate contacts are provided by residues N173, 190 to 191 (HL), 207 to 209 (SVY), R221, and 281 to 284 (RGRD).

The protein belongs to the NAD(P)-dependent epimerase/dehydratase family. Homodimer. The cofactor is NAD(+).

It catalyses the reaction UDP-alpha-D-glucose = UDP-alpha-D-galactose. Its pathway is carbohydrate metabolism; galactose metabolism. Functionally, involved in the metabolism of galactose. Catalyzes the conversion of UDP-galactose (UDP-Gal) to UDP-glucose (UDP-Glc) through a mechanism involving the transient reduction of NAD. In Streptomyces lividans, this protein is UDP-glucose 4-epimerase (galE).